The primary structure comprises 49 residues: MGAQDPTDEDRHVCRDTGRKQGLVGKYDIWLCRQSFREMARDMGFKKYD.

This sequence belongs to the universal ribosomal protein uS14 family. Zinc-binding uS14 subfamily. As to quaternary structure, part of the 30S ribosomal subunit.

In terms of biological role, binds 16S rRNA, required for the assembly of 30S particles. This is Small ribosomal subunit protein uS14B from Natronomonas pharaonis (strain ATCC 35678 / DSM 2160 / CIP 103997 / JCM 8858 / NBRC 14720 / NCIMB 2260 / Gabara) (Halobacterium pharaonis).